The following is a 97-amino-acid chain: uncharacterized protein (97 aa).

Ser2 is subject to N-acetylserine.

This is an uncharacterized protein from Mycobacterium tuberculosis (strain ATCC 25618 / H37Rv).